Consider the following 455-residue polypeptide: Beta-cyclopiazonate dehydrogenase (455 aa).

The signal sequence occupies residues 1 to 20 (MATRIASFIGISTVASLALA).

This sequence belongs to the beta-cyclopiazonate dehydrogenase family. FAD serves as cofactor.

It carries out the reaction beta-cyclopiazonate + A = alpha-cyclopiazonate + AH2. In terms of biological role, beta-cyclopiazonate dehydrogenase involved in the synthesis of the fungal neurotoxin alpha-cyclopiazonic acid (CPA). CpaO carries out the dehydrogenation of beta-CPA to yield an unstable enimine product, which is captured by intramolecular cyclization to create the pentacyclic fused scaffold of alpha-cyclopiazonate. This chain is Beta-cyclopiazonate dehydrogenase, found in Aspergillus flavus (strain ATCC 200026 / FGSC A1120 / IAM 13836 / NRRL 3357 / JCM 12722 / SRRC 167).